An 88-amino-acid chain; its full sequence is Small ribosomal subunit protein uS15c (88 aa).

The protein belongs to the universal ribosomal protein uS15 family. Part of the 30S ribosomal subunit.

The protein localises to the plastid. It localises to the chloroplast. In Lepidium virginicum (Virginia pepperweed), this protein is Small ribosomal subunit protein uS15c (rps15).